The chain runs to 262 residues: LysM and putative peptidoglycan-binding domain-containing protein 3 (262 aa).

The Extracellular segment spans residues 1 to 218 (MSGRIPNHGY…PYHGADWSLG (218 aa)). One can recognise a LysM domain in the interval 70 to 114 (ISRDICEGDTLNSIALQYCCTVADLKRANNFLNEQDFFALRTIKI). Residues 219–239 (WWTAVAIMVFVGIITPLFYFL) form a helical membrane-spanning segment. The Cytoplasmic portion of the chain corresponds to 240–262 (YYEVLMKVNTSHTLNSIEKSGPS).

It is found in the cell membrane. It localises to the golgi apparatus. Essential for Golgi structural integrity. This chain is LysM and putative peptidoglycan-binding domain-containing protein 3 (lysmd3), found in Xenopus tropicalis (Western clawed frog).